Here is an 856-residue protein sequence, read N- to C-terminus: DNA mismatch repair protein MutS (856 aa).

Position 623–630 (623–630 (GPNMSGKS)) interacts with ATP.

The protein belongs to the DNA mismatch repair MutS family.

In terms of biological role, this protein is involved in the repair of mismatches in DNA. It is possible that it carries out the mismatch recognition step. This protein has a weak ATPase activity. This Natronomonas pharaonis (strain ATCC 35678 / DSM 2160 / CIP 103997 / JCM 8858 / NBRC 14720 / NCIMB 2260 / Gabara) (Halobacterium pharaonis) protein is DNA mismatch repair protein MutS.